The sequence spans 50 residues: Large ribosomal subunit protein bL33B (50 aa).

It belongs to the bacterial ribosomal protein bL33 family.

This Mesomycoplasma hyopneumoniae (strain 7448) (Mycoplasma hyopneumoniae) protein is Large ribosomal subunit protein bL33B.